Here is a 166-residue protein sequence, read N- to C-terminus: MFPMVTEFMNYGQQTVRAARYIGQGFMITLSHANRLPVTIQYPYEKLITSERFRGRIHFEFDKCIACEVCVRVCPIDLPVVDWKLETDIRKKRLLNYSIDFGICIFCGNCVEYCPTNCLSMTEEYELSTYDRHELNYNQIALGRVPMSIIDDYTIRTILNLPEIKT.

2 consecutive 4Fe-4S ferredoxin-type domains span residues 55–84 (GRIH…VDWK) and 95–124 (LNYS…MTEE). Positions 64, 67, 70, 74, 104, 107, 110, and 114 each coordinate [4Fe-4S] cluster.

The protein belongs to the complex I 23 kDa subunit family. As to quaternary structure, NDH is composed of at least 16 different subunits, 5 of which are encoded in the nucleus. Requires [4Fe-4S] cluster as cofactor.

The protein localises to the plastid. The protein resides in the chloroplast thylakoid membrane. The catalysed reaction is a plastoquinone + NADH + (n+1) H(+)(in) = a plastoquinol + NAD(+) + n H(+)(out). It carries out the reaction a plastoquinone + NADPH + (n+1) H(+)(in) = a plastoquinol + NADP(+) + n H(+)(out). In terms of biological role, NDH shuttles electrons from NAD(P)H:plastoquinone, via FMN and iron-sulfur (Fe-S) centers, to quinones in the photosynthetic chain and possibly in a chloroplast respiratory chain. The immediate electron acceptor for the enzyme in this species is believed to be plastoquinone. Couples the redox reaction to proton translocation, and thus conserves the redox energy in a proton gradient. The protein is NAD(P)H-quinone oxidoreductase subunit I, chloroplastic of Ambrosia trifida (Giant ragweed).